We begin with the raw amino-acid sequence, 379 residues long: Putative acetyl-CoA C-acetyltransferase VraB (379 aa).

Cys-86 acts as the Acyl-thioester intermediate in catalysis. His-338 (proton acceptor) is an active-site residue.

This sequence belongs to the thiolase-like superfamily. Thiolase family.

The chain is Putative acetyl-CoA C-acetyltransferase VraB (vraB) from Staphylococcus aureus (strain Mu3 / ATCC 700698).